The sequence spans 532 residues: Berberine bridge enzyme-like 23 (532 aa).

The signal sequence occupies residues 1–22; the sequence is MRTLEAFALSLFLVFLVKWVNS. Cysteines 36 and 102 form a disulfide. An N-linked (GlcNAc...) asparagine glycan is attached at asparagine 78. Residues 80–256 form the FAD-binding PCMH-type domain; sequence TSQKPILIVT…LSWKVKLVRV (177 aa). The segment at residues 117–180 is a cross-link (6-(S-cysteinyl)-8alpha-(pros-histidyl)-FAD (His-Cys)); it reads HDYEGLSYLS…KIHGFPAGTC (64 aa). 2 N-linked (GlcNAc...) asparagine glycosylation sites follow: asparagine 272 and asparagine 487.

It belongs to the oxygen-dependent FAD-linked oxidoreductase family. Requires FAD as cofactor. The FAD cofactor is bound via a bicovalent 6-S-cysteinyl, 8alpha-N1-histidyl FAD linkage. Accumulates in cell walls of etiolated hypocotyls.

Its subcellular location is the secreted. The protein localises to the cell wall. In Arabidopsis thaliana (Mouse-ear cress), this protein is Berberine bridge enzyme-like 23.